A 98-amino-acid chain; its full sequence is NADH-ubiquinone oxidoreductase chain 4L (98 aa).

A run of 3 helical transmembrane segments spans residues 1–21 (MSLT…GLLM), 30–50 (LLCL…TILI), and 61–81 (IILL…LVAV).

The protein belongs to the complex I subunit 4L family. In terms of assembly, core subunit of respiratory chain NADH dehydrogenase (Complex I) which is composed of 45 different subunits.

Its subcellular location is the mitochondrion inner membrane. The enzyme catalyses a ubiquinone + NADH + 5 H(+)(in) = a ubiquinol + NAD(+) + 4 H(+)(out). In terms of biological role, core subunit of the mitochondrial membrane respiratory chain NADH dehydrogenase (Complex I) which catalyzes electron transfer from NADH through the respiratory chain, using ubiquinone as an electron acceptor. Part of the enzyme membrane arm which is embedded in the lipid bilayer and involved in proton translocation. This is NADH-ubiquinone oxidoreductase chain 4L (MT-ND4L) from Pipistrellus abramus (Japanese pipistrelle).